The sequence spans 135 residues: HTH-type transcriptional regulator CueR (135 aa).

In terms of domain architecture, HTH merR-type spans Met1 to Leu69. The segment at residues Ser4–Lys23 is a DNA-binding region (H-T-H motif). The Cu(+) site is built by Cys112 and Cys120.

In terms of assembly, homodimer.

The protein resides in the cytoplasm. Its function is as follows. Regulates the transcription of the copA and cueO genes. It detects cytoplasmic copper stress and activates transcription in response to increasing copper concentrations. The polypeptide is HTH-type transcriptional regulator CueR (cueR) (Escherichia coli O157:H7).